We begin with the raw amino-acid sequence, 494 residues long: Gram-negative bacteria-binding protein 1 (494 aa).

The N-terminal stretch at 1 to 19 (MPGLCIGILLLIGFGCTTA) is a signal peptide. In terms of domain architecture, CBM39 spans 20–120 (YKIPTPTVEL…QPLPVCNLGG (101 aa)). N-linked (GlcNAc...) asparagine glycosylation is found at Asn56 and Asn81. Residues 126-160 (GCSPGDDDFTDDNQLSTEDSALEPTAPSVCEPSES) are disordered. One can recognise a GH16 domain in the interval 135 to 494 (TDDNQLSTED…DYVRVFATDN (360 aa)). An N-linked (GlcNAc...) asparagine glycan is attached at Asn185.

This sequence belongs to the insect beta-1,3-glucan binding protein family.

The protein resides in the cell membrane. Its function is as follows. Plays a key role in innate immunity by acting as a pattern recognition receptor for beta-1,3-glucan from fungi and lipopolysaccharide from Gram-negative bacteria. Upon recognition of invading microorganism-derived products, acts upstream of protease spz processing enzyme SPE to activate the Toll pathway and to induce the expression of antimicrobial peptides drosomycin, cecropin and attacin. This is Gram-negative bacteria-binding protein 1 from Drosophila melanogaster (Fruit fly).